We begin with the raw amino-acid sequence, 456 residues long: Shootin-1 (456 aa).

Methionine 1 is subject to N-acetylmethionine. Serine 3 and serine 4 each carry phosphoserine. Residues 7–353 (EKQLQLITSL…RVNQSENSVP (347 aa)) are a coiled coil. Residues serine 101 and serine 249 each carry the phosphoserine; by PAK1 modification. Disordered regions lie at residues 343–405 (KRVN…VTDL) and 418–445 (KKGV…CESA). A compositionally biased stretch (pro residues) spans 352 to 369 (VPPPPPPPPPLPPPPPNP). Serine 375 is modified (phosphoserine).

This sequence belongs to the shootin family. Interacts with L1CAM; this interaction occurs in axonal growth cones. Interacts with actin filament retrograde flow; this interaction is enhanced in a netrin-1- and PAK1-dependent manner and promotes F-actin-substrate coupling and concomitant formation of traction forces at axonal growth cones. Interacts with RUFY3. Interacts with PFN2. Interacts (via N-terminus) with KIF20B; this interaction is direct and promotes the association of SHTN1 to microtubules in primary neurons. Associates with microtubule. Post-translationally, phosphorylated on Ser-101 and Ser-249 by PAK1 through a CDC42- and RAC1-dependent signaling pathway, which enhances its association with F-actin retrograde flow in filopodia and lamellipodia of axonal growth cones. Phosphorylation on Ser-101 and Ser-249 is increased by netrin-1.

It localises to the perikaryon. It is found in the cell projection. Its subcellular location is the axon. The protein resides in the growth cone. The protein localises to the cytoplasm. It localises to the cytoskeleton. It is found in the filopodium. Its subcellular location is the lamellipodium. Involved in the generation of internal asymmetric signals required for neuronal polarization and neurite outgrowth. Mediates netrin-1-induced F-actin-substrate coupling or 'clutch engagement' within the axon growth cone through activation of CDC42, RAC1 and PAK1-dependent signaling pathway, thereby converting the F-actin retrograde flow into traction forces, concomitantly with filopodium extension and axon outgrowth. Plays a role in cytoskeletal organization by regulating the subcellular localization of phosphoinositide 3-kinase (PI3K) activity at the axonal growth cone. Also plays a role in regenerative neurite outgrowth. In the developing cortex, cooperates with KIF20B to promote both the transition from the multipolar to the bipolar stage and the radial migration of cortical neurons from the ventricular zone toward the superficial layer of the neocortex. Involved in the accumulation of phosphatidylinositol 3,4,5-trisphosphate (PIP3) in the growth cone of primary hippocampal neurons. This Pongo abelii (Sumatran orangutan) protein is Shootin-1.